The chain runs to 514 residues: Cobyric acid synthase (514 aa).

The GATase cobBQ-type domain maps to 258–458 (ALMVGVVRLP…IHGIFDNDGL (201 aa)). The Nucleophile role is filled by C339. H450 is an active-site residue.

It belongs to the CobB/CobQ family. CobQ subfamily.

It functions in the pathway cofactor biosynthesis; adenosylcobalamin biosynthesis. Functionally, catalyzes amidations at positions B, D, E, and G on adenosylcobyrinic A,C-diamide. NH(2) groups are provided by glutamine, and one molecule of ATP is hydrogenolyzed for each amidation. In Syntrophobacter fumaroxidans (strain DSM 10017 / MPOB), this protein is Cobyric acid synthase.